The primary structure comprises 54 residues: ATP synthase protein 8 (54 aa).

Residues 8–28 form a helical membrane-spanning segment; sequence WWIINFFIIWTAILLTLVILV.

It belongs to the ATPase protein 8 family. F-type ATPases have 2 components, CF(1) - the catalytic core - and CF(0) - the membrane proton channel.

The protein resides in the mitochondrion membrane. In terms of biological role, mitochondrial membrane ATP synthase (F(1)F(0) ATP synthase or Complex V) produces ATP from ADP in the presence of a proton gradient across the membrane which is generated by electron transport complexes of the respiratory chain. F-type ATPases consist of two structural domains, F(1) - containing the extramembraneous catalytic core and F(0) - containing the membrane proton channel, linked together by a central stalk and a peripheral stalk. During catalysis, ATP synthesis in the catalytic domain of F(1) is coupled via a rotary mechanism of the central stalk subunits to proton translocation. Part of the complex F(0) domain. Minor subunit located with subunit a in the membrane. The protein is ATP synthase protein 8 (MT-ATP8) of Paracentrotus lividus (Common sea urchin).